Consider the following 429-residue polypeptide: Probable M18 family aminopeptidase 2 (429 aa).

Zn(2+) is bound by residues His82, His156, and His401.

The protein belongs to the peptidase M18 family. Zn(2+) is required as a cofactor.

The polypeptide is Probable M18 family aminopeptidase 2 (Stutzerimonas stutzeri (strain A1501) (Pseudomonas stutzeri)).